A 96-amino-acid chain; its full sequence is Beta-defensin 20 (96 aa).

The first 21 residues, 1–21 (MKLPQLLLILLFVVLADSVQP), serve as a signal peptide directing secretion. Cystine bridges form between Cys-24–Cys-52, Cys-32–Cys-46, and Cys-36–Cys-53.

This sequence belongs to the beta-defensin family.

Its subcellular location is the secreted. Functionally, has antibacterial activity. The sequence is that of Beta-defensin 20 (Defb20) from Rattus norvegicus (Rat).